The chain runs to 349 residues: 5,10-methylenetetrahydromethanopterin reductase (349 aa).

This sequence belongs to the mer family. As to quaternary structure, homotetramer composed of two loosely associated dimers.

The protein resides in the cytoplasm. It carries out the reaction 5-methyl-5,6,7,8-tetrahydromethanopterin + oxidized coenzyme F420-(gamma-L-Glu)(n) + H(+) = 5,10-methylenetetrahydromethanopterin + reduced coenzyme F420-(gamma-L-Glu)(n). It functions in the pathway one-carbon metabolism; methanogenesis from CO(2); methyl-coenzyme M from 5,10-methylene-5,6,7,8-tetrahydromethanopterin: step 1/2. Its activity is regulated as follows. Requires the presence of relatively high concentrations of either sulfate or phosphate for maximal activity. Its function is as follows. Catalyzes the reversible reduction of methylene-H(4)MPT to methyl-H(4)MPT. The sequence is that of 5,10-methylenetetrahydromethanopterin reductase from Methanopyrus kandleri (strain AV19 / DSM 6324 / JCM 9639 / NBRC 100938).